Here is a 233-residue protein sequence, read N- to C-terminus: MARRPDLKTGPARLAALVRTSVPPMHPAGLPFVGASLAVALAGRKSRWLRNAGVASAAANAAFFRHPPRTPPTRPGVVVAPADGLICLIEEAVPPSELRLPATPLPRISIFLSLLDAHVQRAPLGGEVIAVEHRPGLFGSADLAAASADNERNSIVIRSPEGAEVIAVQIAGLLARRIVCDVEPGDTVGLGDTYGLIRYGSRLDTYLPAGSDILVDVGQRTLAGETVLAELPR.

S201 functions as the Schiff-base intermediate with substrate; via pyruvic acid in the catalytic mechanism. S201 is modified (pyruvic acid (Ser); by autocatalysis).

It belongs to the phosphatidylserine decarboxylase family. PSD-A subfamily. As to quaternary structure, heterodimer of a large membrane-associated beta subunit and a small pyruvoyl-containing alpha subunit. Pyruvate is required as a cofactor. Post-translationally, is synthesized initially as an inactive proenzyme. Formation of the active enzyme involves a self-maturation process in which the active site pyruvoyl group is generated from an internal serine residue via an autocatalytic post-translational modification. Two non-identical subunits are generated from the proenzyme in this reaction, and the pyruvate is formed at the N-terminus of the alpha chain, which is derived from the carboxyl end of the proenzyme. The post-translation cleavage follows an unusual pathway, termed non-hydrolytic serinolysis, in which the side chain hydroxyl group of the serine supplies its oxygen atom to form the C-terminus of the beta chain, while the remainder of the serine residue undergoes an oxidative deamination to produce ammonia and the pyruvoyl prosthetic group on the alpha chain.

Its subcellular location is the cell membrane. The catalysed reaction is a 1,2-diacyl-sn-glycero-3-phospho-L-serine + H(+) = a 1,2-diacyl-sn-glycero-3-phosphoethanolamine + CO2. The protein operates within phospholipid metabolism; phosphatidylethanolamine biosynthesis; phosphatidylethanolamine from CDP-diacylglycerol: step 2/2. Catalyzes the formation of phosphatidylethanolamine (PtdEtn) from phosphatidylserine (PtdSer). The sequence is that of Phosphatidylserine decarboxylase proenzyme from Mycolicibacterium vanbaalenii (strain DSM 7251 / JCM 13017 / BCRC 16820 / KCTC 9966 / NRRL B-24157 / PYR-1) (Mycobacterium vanbaalenii).